We begin with the raw amino-acid sequence, 402 residues long: Phosphoglycerate kinase (402 aa).

Residues 24–26, R40, 63–66, R122, and R155 contribute to the substrate site; these read DFN and HFGR. ATP contacts are provided by residues K206, G297, E328, and 358–361; that span reads GGDS.

It belongs to the phosphoglycerate kinase family. In terms of assembly, monomer.

Its subcellular location is the cytoplasm. It carries out the reaction (2R)-3-phosphoglycerate + ATP = (2R)-3-phospho-glyceroyl phosphate + ADP. It participates in carbohydrate degradation; glycolysis; pyruvate from D-glyceraldehyde 3-phosphate: step 2/5. The protein is Phosphoglycerate kinase of Prochlorococcus marinus (strain AS9601).